A 449-amino-acid polypeptide reads, in one-letter code: MTNANPDAFYIHTFGCQMNQADSGIMTAILQNEGYVAASNEADAGIVLLNTCAVREHATERVGHLLQHLHGRKKRSKGRLLVGVTGCIPQYEREVLFKNYPVVDFLAGPDTYRSLPLLIKQVQQAGKGATEAALAFNSAETYDGIEPVRSSSMSAFVPVMRGCNNHCAYCVVPLTRGRERSHPKAAVLNEVRQLAEAGYREITLLGQNVNSYYDPLAQCNFAELLAAVSCAAPATRIRFTTSHPKDISEALVRTIAEHSNICNHIHLPVQSGSSRILRLMQRGHTIEEYLEKIALIRSLIPNVTLSTDMIAGFCGETEADHQATLRLLEEVQFDSAFMFYYSPRPRTPAAEKLTDDVPEALKKARLQEIIECQNRISASLFSQAVGSVVEVLAEAESRRSSEQLMGRTAGNRTVVFARNGYQAGDVLHVRITGSTSATLLGEPLISTTL.

Residues 7–124 form the MTTase N-terminal domain; sequence DAFYIHTFGC…LPLLIKQVQQ (118 aa). The [4Fe-4S] cluster site is built by C16, C52, C87, C163, C167, and C170. The region spanning 149–379 is the Radical SAM core domain; that stretch reads RSSSMSAFVP…IECQNRISAS (231 aa). The TRAM domain occupies 382 to 445; the sequence is SQAVGSVVEV…SATLLGEPLI (64 aa).

It belongs to the methylthiotransferase family. MiaB subfamily. Monomer. [4Fe-4S] cluster is required as a cofactor.

The protein localises to the cytoplasm. It catalyses the reaction N(6)-dimethylallyladenosine(37) in tRNA + (sulfur carrier)-SH + AH2 + 2 S-adenosyl-L-methionine = 2-methylsulfanyl-N(6)-dimethylallyladenosine(37) in tRNA + (sulfur carrier)-H + 5'-deoxyadenosine + L-methionine + A + S-adenosyl-L-homocysteine + 2 H(+). Functionally, catalyzes the methylthiolation of N6-(dimethylallyl)adenosine (i(6)A), leading to the formation of 2-methylthio-N6-(dimethylallyl)adenosine (ms(2)i(6)A) at position 37 in tRNAs that read codons beginning with uridine. In Chlorobium chlorochromatii (strain CaD3), this protein is tRNA-2-methylthio-N(6)-dimethylallyladenosine synthase.